A 306-amino-acid chain; its full sequence is Ribosomal protein L11 methyltransferase (306 aa).

S-adenosyl-L-methionine contacts are provided by Thr-154, Gly-179, Asp-201, and Asn-242.

It belongs to the methyltransferase superfamily. PrmA family.

Its subcellular location is the cytoplasm. The enzyme catalyses L-lysyl-[protein] + 3 S-adenosyl-L-methionine = N(6),N(6),N(6)-trimethyl-L-lysyl-[protein] + 3 S-adenosyl-L-homocysteine + 3 H(+). Functionally, methylates ribosomal protein L11. This is Ribosomal protein L11 methyltransferase from Xanthomonas axonopodis pv. citri (strain 306).